We begin with the raw amino-acid sequence, 581 residues long: Ras-specific guanine nucleotide-releasing factor RalGPS1 (581 aa).

Positions 1–31 (MYRRNGLPASVSITSRNTQDSSSSESLDGRS) are disordered. The Ras-GEF domain occupies 49-288 (TPEEFASQIT…YSLSLKIEPG (240 aa)). Residues 320–339 (PDTSVVAHLPTPPPARHRKS) form a disordered region. The PXXP motif lies at 329–332 (PTPP). Residues 455–567 (SITIEGPLRR…WHRHLAEACR (113 aa)) form the PH domain.

The protein localises to the cytoplasm. The protein resides in the cell membrane. Its function is as follows. Guanine nucleotide exchange factor. May be involved in cytoskeletal organization. The sequence is that of Ras-specific guanine nucleotide-releasing factor RalGPS1 (ralgps1) from Danio rerio (Zebrafish).